Here is a 589-residue protein sequence, read N- to C-terminus: Vomeromodulin (589 aa).

The signal sequence occupies residues 1–29 (MWVLQALAIMLSIQAGVLDLVEVPPVVRS). Disordered stretches follow at residues 49-71 (GLND…SRGG) and 146-170 (LLGK…GLGQ). N-linked (GlcNAc...) asparagine glycans are attached at residues Asn419 and Asn437.

N-glycosylated. The N-glycans consist mainly of complex sialylated and fucosylated biantennary structures. In terms of tissue distribution, abundant in the lateral nasal glands. Also present in the posterior septal and vomeronasal glands.

Its subcellular location is the secreted. This chain is Vomeromodulin, found in Rattus norvegicus (Rat).